The chain runs to 130 residues: Phosphoribosyl-AMP cyclohydrolase (130 aa).

Asp-77 is a Mg(2+) binding site. Position 78 (Cys-78) interacts with Zn(2+). 2 residues coordinate Mg(2+): Asp-79 and Asp-81. Zn(2+) contacts are provided by Cys-95 and Cys-102.

It belongs to the PRA-CH family. As to quaternary structure, homodimer. It depends on Mg(2+) as a cofactor. Zn(2+) serves as cofactor.

It localises to the cytoplasm. It carries out the reaction 1-(5-phospho-beta-D-ribosyl)-5'-AMP + H2O = 1-(5-phospho-beta-D-ribosyl)-5-[(5-phospho-beta-D-ribosylamino)methylideneamino]imidazole-4-carboxamide. It functions in the pathway amino-acid biosynthesis; L-histidine biosynthesis; L-histidine from 5-phospho-alpha-D-ribose 1-diphosphate: step 3/9. Functionally, catalyzes the hydrolysis of the adenine ring of phosphoribosyl-AMP. The sequence is that of Phosphoribosyl-AMP cyclohydrolase from Pseudomonas syringae pv. tomato (strain ATCC BAA-871 / DC3000).